Reading from the N-terminus, the 152-residue chain is NADH-quinone oxidoreductase subunit I 1 (152 aa).

4Fe-4S ferredoxin-type domains follow at residues 53–83 (MKLG…MKSD) and 94–123 (VTYV…LGTG). Positions 63, 66, 69, 73, 103, 106, 109, and 113 each coordinate [4Fe-4S] cluster.

Belongs to the complex I 23 kDa subunit family. NDH-1 is composed of 14 different subunits. Subunits NuoA, H, J, K, L, M, N constitute the membrane sector of the complex. Requires [4Fe-4S] cluster as cofactor.

It is found in the cell inner membrane. It catalyses the reaction a quinone + NADH + 5 H(+)(in) = a quinol + NAD(+) + 4 H(+)(out). In terms of biological role, NDH-1 shuttles electrons from NADH, via FMN and iron-sulfur (Fe-S) centers, to quinones in the respiratory chain. The immediate electron acceptor for the enzyme in this species is believed to be ubiquinone. Couples the redox reaction to proton translocation (for every two electrons transferred, four hydrogen ions are translocated across the cytoplasmic membrane), and thus conserves the redox energy in a proton gradient. This Koribacter versatilis (strain Ellin345) protein is NADH-quinone oxidoreductase subunit I 1.